A 697-amino-acid polypeptide reads, in one-letter code: Elongation factor G (697 aa).

In terms of domain architecture, tr-type G spans 8–283; the sequence is ERCRNIGIMA…AVVDYLPSPL (276 aa). GTP is bound by residues 17–24, 81–85, and 135–138; these read AHIDAGKT, DTPGH, and NKID.

This sequence belongs to the TRAFAC class translation factor GTPase superfamily. Classic translation factor GTPase family. EF-G/EF-2 subfamily.

The protein localises to the cytoplasm. Catalyzes the GTP-dependent ribosomal translocation step during translation elongation. During this step, the ribosome changes from the pre-translocational (PRE) to the post-translocational (POST) state as the newly formed A-site-bound peptidyl-tRNA and P-site-bound deacylated tRNA move to the P and E sites, respectively. Catalyzes the coordinated movement of the two tRNA molecules, the mRNA and conformational changes in the ribosome. This is Elongation factor G from Koribacter versatilis (strain Ellin345).